A 339-amino-acid polypeptide reads, in one-letter code: Flap endonuclease 1 (339 aa).

The interval 1–99 is N-domain; the sequence is MGVNLKEIVD…VAWEKRKKHK (99 aa). Mg(2+) is bound by residues aspartate 29, aspartate 81, glutamate 153, glutamate 155, aspartate 174, aspartate 176, and aspartate 237. The segment at 117-258 is I-domain; that stretch reads EAIKYAKSLG…TAIEIVKRFG (142 aa). Residues 329–337 form an interaction with PCNA region; the sequence is NQKTLFSFF.

It belongs to the XPG/RAD2 endonuclease family. FEN1 subfamily. In terms of assembly, interacts with PCNA. PCNA stimulates the nuclease activity without altering cleavage specificity. Mg(2+) serves as cofactor.

In terms of biological role, structure-specific nuclease with 5'-flap endonuclease and 5'-3' exonuclease activities involved in DNA replication and repair. During DNA replication, cleaves the 5'-overhanging flap structure that is generated by displacement synthesis when DNA polymerase encounters the 5'-end of a downstream Okazaki fragment. Binds the unpaired 3'-DNA end and kinks the DNA to facilitate 5' cleavage specificity. Cleaves one nucleotide into the double-stranded DNA from the junction in flap DNA, leaving a nick for ligation. Also involved in the base excision repair (BER) pathway. Acts as a genome stabilization factor that prevents flaps from equilibrating into structures that lead to duplications and deletions. Also possesses 5'-3' exonuclease activity on nicked or gapped double-stranded DNA. The chain is Flap endonuclease 1 from Nanoarchaeum equitans (strain Kin4-M).